A 119-amino-acid chain; its full sequence is DNA-directed RNA polymerase subunit omega (119 aa).

It belongs to the RNA polymerase subunit omega family. In terms of assembly, the RNAP catalytic core consists of 2 alpha, 1 beta, 1 beta' and 1 omega subunit. When a sigma factor is associated with the core the holoenzyme is formed, which can initiate transcription.

The catalysed reaction is RNA(n) + a ribonucleoside 5'-triphosphate = RNA(n+1) + diphosphate. In terms of biological role, promotes RNA polymerase assembly. Latches the N- and C-terminal regions of the beta' subunit thereby facilitating its interaction with the beta and alpha subunits. This chain is DNA-directed RNA polymerase subunit omega, found in Caulobacter sp. (strain K31).